We begin with the raw amino-acid sequence, 163 residues long: Acetolactate synthase isozyme 3 small subunit (163 aa).

Residues 4-78 (ILSVLLENES…DVLRVSELGQ (75 aa)) enclose the ACT domain.

The protein belongs to the acetolactate synthase small subunit family. As to quaternary structure, dimer of large and small chains.

The catalysed reaction is 2 pyruvate + H(+) = (2S)-2-acetolactate + CO2. It participates in amino-acid biosynthesis; L-isoleucine biosynthesis; L-isoleucine from 2-oxobutanoate: step 1/4. It functions in the pathway amino-acid biosynthesis; L-valine biosynthesis; L-valine from pyruvate: step 1/4. Its activity is regulated as follows. Sensitive to valine inhibition. This Salmonella typhimurium (strain LT2 / SGSC1412 / ATCC 700720) protein is Acetolactate synthase isozyme 3 small subunit (ilvH).